A 567-amino-acid chain; its full sequence is Urease subunit alpha (567 aa).

The 439-residue stretch at 129-567 (GGIDTHIHFI…LPMAQRYFLF (439 aa)) folds into the Urease domain. Ni(2+) is bound by residues His-134, His-136, and Lys-217. Position 217 is an N6-carboxylysine (Lys-217). His-219 contacts substrate. Ni(2+) is bound by residues His-246 and His-272. His-320 functions as the Proton donor in the catalytic mechanism. Residue Asp-360 coordinates Ni(2+).

Belongs to the metallo-dependent hydrolases superfamily. Urease alpha subunit family. Probable heterotrimer of UreA (gamma), UreB (beta) and UreC (alpha) subunits. Three heterotrimers associate to form the active enzyme. The trimeric urease interacts with an accessory complex composed of UreD, UreF and UreG, which is required for the assembly of the nickel containing metallocenter of UreC. The UreE protein may also play a direct role in nickel transfer to the urease apoprotein. The cofactor is Ni cation. Carboxylation allows a single lysine to coordinate two nickel ions.

Its subcellular location is the cytoplasm. The catalysed reaction is urea + 2 H2O + H(+) = hydrogencarbonate + 2 NH4(+). It functions in the pathway nitrogen metabolism; urea degradation; CO(2) and NH(3) from urea (urease route): step 1/1. This Proteus mirabilis (strain HI4320) protein is Urease subunit alpha.